Reading from the N-terminus, the 224-residue chain is Large ribosomal subunit protein uL16z (224 aa).

This sequence belongs to the universal ribosomal protein uL16 family. Component of the small ribosomal subunit. Mature ribosomes consist of a small (40S) and a large (60S) subunit. The 40S subunit contains about 33 different proteins and 1 molecule of RNA (18S). The 60S subunit contains about 49 different proteins and 3 molecules of RNA (25S, 5.8S and 5S).

This chain is Large ribosomal subunit protein uL16z (SC34), found in Oryza sativa subsp. indica (Rice).